The chain runs to 541 residues: Transcription factor STP2 (541 aa).

Residues 13–32 (VLTRIYDYLKALVQQVIVPN) are i. The disordered stretch occupies residues 35-58 (DDKSSKSTPFEKLEPAKQNHPQKD). The II stretch occupies residues 73–105 (LFPKQNNKQLSLTSKSSVVPCALNLDNLETPFS). The C2H2-type 1 zinc-finger motif lies at 204-226 (YICHYCDARFRIRGYLTRHIKKH). A C2H2-type 2; atypical zinc finger spans residues 232–267 (YHCPFFDNSISQELRCHTSGGFSRRDTYKTHLKSRH). The C2H2-type 3; atypical zinc-finger motif lies at 284–309 (GVCTQCGEHFSTSESWVENHIEAGSC). Positions 452–462 (SSASSALSPLS) are enriched in low complexity. Positions 452–497 (SSASSALSPLSGDPITTTETNKSYPLDSEQSLLEPDKTEEDAINQS) are disordered. A compositionally biased stretch (polar residues) spans 465-482 (PITTTETNKSYPLDSEQS).

Interacts (via Region II) with SSY5; protease component of the SPS-sensor. Post-translationally, activated by the amino acid-induced proteolytic removal of an N-terminal inhibitory domain by serine protease SSY5, an intrinsic component of the SPS-sensor. Processing requires at least 2 components of the SCF(GRR1) ubiquitin ligase complex, namely the F-box protein GRR1 and the E2 enzyme CDC34, but does not depend on the proteasome. Processing is negatively regulated by the protein phosphatase 2A regulatory subunit RTS1.

The protein localises to the cell membrane. The protein resides in the nucleus. Transcription factor involved in the regulation of gene expression in response to extracellular amino acid levels. Synthesized as latent cytoplasmic precursor, which, upon a signal initiated by the plasma membrane SPS (SSY1-PTR3-SSY5) amino acid sensor system, becomes proteolytically activated and relocates to the nucleus, where it induces the expression of SPS-sensor-regulated genes, including the amino-acid permeases BAP2 and BAP3. Binding to promoters is facilitated by DAL81. Involved in the repression of genes subject to nitrogen catabolite repression and genes involved in stress response. Negatively regulated by inner nuclear membrane proteins ASI1, ASI2 and ASI3, which prevent unprocessed precursor forms that escape cytoplasmic anchoring from inducing SPS-sensor-regulated genes. The protein is Transcription factor STP2 (STP2) of Saccharomyces cerevisiae (strain ATCC 204508 / S288c) (Baker's yeast).